Reading from the N-terminus, the 244-residue chain is Flavin-dependent thymidylate synthase (244 aa).

One can recognise a ThyX domain in the interval 17 to 239 (ITVELVKHSA…PETHAAFEKQ (223 aa)). FAD-binding positions include Ser-68, 91–93 (RHR), and Glu-99. DUMP-binding positions include 88–91 (EFMR), 99–103 (EESGR), and Arg-171. The ThyX motif signature appears at 91–101 (RHRIASYNEES). Residues 187-189 (NAR) and Asn-193 each bind FAD. Residue Arg-198 coordinates dUMP. Arg-198 acts as the Involved in ionization of N3 of dUMP, leading to its activation in catalysis.

This sequence belongs to the thymidylate synthase ThyX family. Homotetramer. The cofactor is FAD.

The enzyme catalyses dUMP + (6R)-5,10-methylene-5,6,7,8-tetrahydrofolate + NADPH + H(+) = dTMP + (6S)-5,6,7,8-tetrahydrofolate + NADP(+). The protein operates within pyrimidine metabolism; dTTP biosynthesis. Functionally, catalyzes the reductive methylation of 2'-deoxyuridine-5'-monophosphate (dUMP) to 2'-deoxythymidine-5'-monophosphate (dTMP) while utilizing 5,10-methylenetetrahydrofolate (mTHF) as the methyl donor, and NADPH and FADH(2) as the reductant. This is Flavin-dependent thymidylate synthase from Tropheryma whipplei (strain Twist) (Whipple's bacillus).